A 354-amino-acid polypeptide reads, in one-letter code: GTPase Obg (354 aa).

The 159-residue stretch at 1 to 159 folds into the Obg domain; that stretch reads MQFIDHAEIE…KQLRLELKLL (159 aa). The region spanning 160–328 is the OBG-type G domain; that stretch reads AEVGIIGLPN…LLQEIWDVLD (169 aa). Residues 166–173, 191–195, 213–216, 280–283, and 309–311 each bind GTP; these read GLPNAGKS, FTTLI, DIPG, NKLD, and SAV. Mg(2+) is bound by residues Ser-173 and Thr-193.

It belongs to the TRAFAC class OBG-HflX-like GTPase superfamily. OBG GTPase family. As to quaternary structure, monomer. Mg(2+) serves as cofactor.

Its subcellular location is the cytoplasm. An essential GTPase which binds GTP, GDP and possibly (p)ppGpp with moderate affinity, with high nucleotide exchange rates and a fairly low GTP hydrolysis rate. Plays a role in control of the cell cycle, stress response, ribosome biogenesis and in those bacteria that undergo differentiation, in morphogenesis control. This is GTPase Obg from Picosynechococcus sp. (strain ATCC 27264 / PCC 7002 / PR-6) (Agmenellum quadruplicatum).